A 338-amino-acid chain; its full sequence is Homoserine kinase (338 aa).

Belongs to the GHMP kinase family. Homoserine kinase subfamily.

It catalyses the reaction L-homoserine + ATP = O-phospho-L-homoserine + ADP + H(+). It participates in amino-acid biosynthesis; L-threonine biosynthesis; L-threonine from L-aspartate: step 4/5. In terms of biological role, commits homoserine to the threonine biosynthesis pathway by catalyzing its O-phosphorylation. This chain is Homoserine kinase, found in Schizosaccharomyces pombe (strain 972 / ATCC 24843) (Fission yeast).